The chain runs to 131 residues: Small ribosomal subunit protein uS8 (131 aa).

This sequence belongs to the universal ribosomal protein uS8 family. Part of the 30S ribosomal subunit. Contacts proteins S5 and S12.

One of the primary rRNA binding proteins, it binds directly to 16S rRNA central domain where it helps coordinate assembly of the platform of the 30S subunit. The sequence is that of Small ribosomal subunit protein uS8 from Hydrogenovibrio crunogenus (strain DSM 25203 / XCL-2) (Thiomicrospira crunogena).